The sequence spans 337 residues: Phenylalanine--tRNA ligase alpha subunit (337 aa).

Position 252 (glutamate 252) interacts with Mg(2+).

It belongs to the class-II aminoacyl-tRNA synthetase family. Phe-tRNA synthetase alpha subunit type 1 subfamily. As to quaternary structure, tetramer of two alpha and two beta subunits. It depends on Mg(2+) as a cofactor.

It localises to the cytoplasm. The catalysed reaction is tRNA(Phe) + L-phenylalanine + ATP = L-phenylalanyl-tRNA(Phe) + AMP + diphosphate + H(+). This is Phenylalanine--tRNA ligase alpha subunit from Francisella tularensis subsp. mediasiatica (strain FSC147).